We begin with the raw amino-acid sequence, 617 residues long: MKQSKMPIPTLREMPSDAQVISHALMLRAGYVRQVSAGVYSYLPLANRVIEKAKNIMRQEFEKIGAVEMLAPALLSAELWRESGRYETYGEDLYKLKNREKSDFILGPTHEETFTAIVRDSVKSYKQLPLNLYQIQPKYRDEKRPRNGLLRTREFIMKDAYSFHANYDSLDSVYDEYKAAYERIFTRSGLDFKAIIGDGGAMGGKDSQEFMAITSARTDLDRWVVLDKSVASFDEIPAEVQEEIKAELLKWIVSGEDTIAYSSESSYAANLEMATNEYKPSNRVVAEEEVTRVATPDVKSIDEVAAFLNVPEEQTIKTLFYIADGELVAALLVGNDQLNEVKLKNHLGADFFDVASEEEVANVVQAGFGSLGPVGLPENIKIIADRKVQDVRNAVVGANEDGYHLTGVNPGRDFTSEYVDIREVREGEISPDGQGVLNFARGIEIGHIFKLGTRYSASMGADVLDENGRAVPIIMGCYGIGVSRLLSAVMEQHARLFVNKTPKGEYRYAWGINFPKELAPFDVHLITVNVKDEEAQALTEKLEASLMGAGYEVLTDDRNERVGVKFSDSDLIGLPIRITVGKKAADGIVEVKIKATGDTIEVHADNVLETLEILSKK.

This sequence belongs to the class-II aminoacyl-tRNA synthetase family. ProS type 1 subfamily. Homodimer.

It localises to the cytoplasm. It catalyses the reaction tRNA(Pro) + L-proline + ATP = L-prolyl-tRNA(Pro) + AMP + diphosphate. Catalyzes the attachment of proline to tRNA(Pro) in a two-step reaction: proline is first activated by ATP to form Pro-AMP and then transferred to the acceptor end of tRNA(Pro). As ProRS can inadvertently accommodate and process non-cognate amino acids such as alanine and cysteine, to avoid such errors it has two additional distinct editing activities against alanine. One activity is designated as 'pretransfer' editing and involves the tRNA(Pro)-independent hydrolysis of activated Ala-AMP. The other activity is designated 'posttransfer' editing and involves deacylation of mischarged Ala-tRNA(Pro). The misacylated Cys-tRNA(Pro) is not edited by ProRS. In Streptococcus pneumoniae serotype 19F (strain G54), this protein is Proline--tRNA ligase.